Here is a 318-residue protein sequence, read N- to C-terminus: MTIELSIVIPMYNEEDNLEHLFARLLEVLTPLKITYEIICVNDGSKDKTLKQLIDCYQSNRQIKIVNLSRNFGKEIALSAGIDYAQGNAVIPIDADLQDPPELIHELVDKWREGYDIVYATRRSRQGETWVKQFTAKMFYKVIGRMTEIKIPPNTGDFRLMDRKVVNAIKQLPERTRFMKGLFAWVGYRQTFVLFDREPRFQGQTKWNYWKLWNFALDGIFSFSLLPLKVWTYLGSIISLLSLAYASFLILKTITLGVDVPGYASLMVAILFLGGVQLISLGVIGEYLGRVYEEVKARPLYLVSDLWGLEYLPLEKLN.

Helical transmembrane passes span 230-250 and 264-284; these read VWTYLGSIISLLSLAYASFLI and ASLMVAILFLGGVQLISLGVI.

The protein belongs to the glycosyltransferase 2 family. GtrB subfamily.

Its subcellular location is the cell membrane. This is an uncharacterized protein from Synechocystis sp. (strain ATCC 27184 / PCC 6803 / Kazusa).